The chain runs to 1603 residues: Transcription factor Gibbin (1603 aa).

Disordered stretches follow at residues 19 to 108 (PDYL…SSSR), 150 to 236 (LRLS…STDY), 264 to 285 (LEPP…FLDP), and 394 to 467 (CRRR…RKGK). Residues 30–47 (GGPPTPRPLLPTRPPASP) show a composition bias toward pro residues. At lysine 79 the chain carries N6-acetyllysine. Positions 166 to 178 (SFFSSPSLANSIR) are enriched in polar residues. Basic and acidic residues predominate over residues 179–194 (SPEERATPHAKSERPS). The segment covering 216–225 (PGATAAATGL) has biased composition (low complexity). Serine 268 is modified (phosphoserine). Low complexity predominate over residues 273–285 (PQLLDPQPRFLDP). The a.T hook 1 DNA-binding region spans 396–408 (RRKAGRGRKADAG). Positions 428 to 446 (EPPPPPPPPPPALPGPGPV) are enriched in pro residues. The segment at residues 544-556 (KRKRGRPPKNLLL) is a DNA-binding region (a.T hook 2). Residues 581-607 (MPEVKKRRRRKQKLASPQPSYAADAND) are disordered. Phosphoserine is present on serine 596. Lysine 609 is covalently cross-linked (Glycyl lysine isopeptide (Lys-Gly) (interchain with G-Cter in SUMO2)). Disordered regions lie at residues 717–792 (LTEL…RNCG) and 806–827 (LESG…GQTE). Residues 737–746 (KPKRKRRSRK) are compositionally biased toward basic residues. Residues 816 to 827 (YYSTGAPSGQTE) are compositionally biased toward polar residues. Serine 829 and serine 846 each carry phosphoserine. Arginine 891 is modified (omega-N-methylarginine). 2 positions are modified to phosphoserine: serine 896 and serine 1064. Disordered regions lie at residues 1159–1198 (VSET…QSSL) and 1253–1286 (ASAA…KKER). Composition is skewed to low complexity over residues 1160–1171 (SETFSESSSDST) and 1187–1198 (SEASSSEGQSSL). The residue at position 1187 (serine 1187) is a Phosphoserine. 3 positions are modified to phosphoserine: serine 1322, serine 1324, and serine 1399. Threonine 1401 is modified (phosphothreonine). Serine 1403 carries the post-translational modification Phosphoserine. Lysine 1409 participates in a covalent cross-link: Glycyl lysine isopeptide (Lys-Gly) (interchain with G-Cter in SUMO2). The interval 1503–1533 (PHLASPPATPKADKEPLEMARPPGPPRGPAA) is disordered. Phosphoserine occurs at positions 1507 and 1549.

It localises to the nucleus. Its subcellular location is the chromosome. Transcription factor required for the proper patterning of the epidermis, which plays a key role in early epithelial morphogenesis. Directly binds promoter and enhancer regions and acts by maintaining local enhancer-promoter chromatin architecture. Interacts with many sequence-specific zinc-finger transcription factors and methyl-CpG-binding proteins to regulate the expression of mesoderm genes that wire surface ectoderm stratification. The chain is Transcription factor Gibbin from Homo sapiens (Human).